The sequence spans 436 residues: Serine hydroxymethyltransferase (436 aa).

(6S)-5,6,7,8-tetrahydrofolate is bound by residues leucine 133 and 137–139; that span reads GHL. Position 242 is an N6-(pyridoxal phosphate)lysine (lysine 242). 366–368 provides a ligand contact to (6S)-5,6,7,8-tetrahydrofolate; sequence SPF.

Belongs to the SHMT family. As to quaternary structure, homodimer. Requires pyridoxal 5'-phosphate as cofactor.

It localises to the cytoplasm. The enzyme catalyses (6R)-5,10-methylene-5,6,7,8-tetrahydrofolate + glycine + H2O = (6S)-5,6,7,8-tetrahydrofolate + L-serine. It functions in the pathway one-carbon metabolism; tetrahydrofolate interconversion. It participates in amino-acid biosynthesis; glycine biosynthesis; glycine from L-serine: step 1/1. Catalyzes the reversible interconversion of serine and glycine with tetrahydrofolate (THF) serving as the one-carbon carrier. This reaction serves as the major source of one-carbon groups required for the biosynthesis of purines, thymidylate, methionine, and other important biomolecules. Also exhibits THF-independent aldolase activity toward beta-hydroxyamino acids, producing glycine and aldehydes, via a retro-aldol mechanism. The polypeptide is Serine hydroxymethyltransferase (Novosphingobium aromaticivorans (strain ATCC 700278 / DSM 12444 / CCUG 56034 / CIP 105152 / NBRC 16084 / F199)).